The primary structure comprises 991 residues: YENDEEYESGIDEKKQEKAALAQPTLDTADDGFSFTPASSTQSTPSISTLSDTISHDGQTSDPITKAVRETIIQPQKDEIAEQILKDLAALVDRDLAEQKRKEIEEEKEKNKTLSAFFGNPANRELIDKALEKPELKKKLEAIEIAGLKNVFLTYIAANGYSGGFKPVQWENQISASDLRATVVKNDAGDELCTLNETTVKTKPFTVAKQDGTQVQINSYREIDFPIKLDKADGSMHLSMVALKADGTKPSKDKAVYFTAHYEEGPNGKPQLKEISSPKPLKFAGDGPDAVAYIEHGGEIYTLAVTRGKYKEMMKEVELHQGQSVDLSQTIAKDLTKVQGRSQETLQPIITPNQELKSSIETPTTTQVPPITPDSQPLQTETAQMPQSQQVNPNLLNAATALSGSMQDLLNYVNAGLTKEKDGNTQIDLINAAATAILNNEKEKQANIIVLTENTVNNNALTPDTKVAGVNAVLENIKNNQNTPDLEKSKMLEATVAIALNSENLAPKQKQQMLEKAVDVGLNLKDDTSRAVAIDGITDTVIKSNLSTKDKGTMLIAVGDKVNASELSNAEKQQLLGSVLKKGVETQVLSPEQQQLMQQHLDKITAEQTKNAKITEVQGILANPAFNTIAKTEAIQNVTTKVLDSPIKAEIKGETLESITKVVAESPLNGQDKVDIVKGMGEAIASHKTMSPTEKISAIESVETGVAESITALEDKKLMTKGLVDGIYEDKANPEMTKAVSRGVDKSTARPEDKQALKDAASEVALDRETQNFTKGLKEQNLEKPKPRDDIYNKAQDVAEALKNVITPVLDAHPEKREVSEEEVMKKTSSILNDISNLTIEKVNNFRAMLSPDSNLKTLEEKKAEATKKVDELVKEFGTKSSTEEQQSFIKANLTDDKTLSKEVRLQTIDKLLQEQAQKRAKAIENPNVKTEDVRVVSEQSELKPISNDEPGIEKTKMVVGRDRVNIKDNIKIIGALMNARDSIIQSENLP.

Residues 1–10 (YENDEEYESG) show a composition bias toward acidic residues. Disordered regions lie at residues 1 to 63 (YEND…TSDP) and 738 to 789 (KAVS…KPRD). Residues 36-63 (TPASSTQSTPSISTLSDTISHDGQTSDP) are compositionally biased toward polar residues. Basic and acidic residues predominate over residues 743–789 (GVDKSTARPEDKQALKDAASEVALDRETQNFTKGLKEQNLEKPKPRD).

The protein resides in the cytoplasm. In Rickettsia australis, this protein is Antigenic heat-stable 120 kDa protein (sca4).